The sequence spans 333 residues: Terminal uridylyltransferase 4 (333 aa).

UTP-binding positions include S54 and 65–68 (SDVD). Mg(2+) contacts are provided by D66 and D68. R121 serves as a coordination point for RNA. UTP is bound by residues 144–148 (GVRNS), K169, K173, and 188–189 (SY). Residues 237-302 (LGTQVLDFLH…WCIEDPYELN (66 aa)) form the PAP-associated domain.

This sequence belongs to the DNA polymerase type-B-like family. In terms of assembly, monomer. Mg(2+) is required as a cofactor. The cofactor is Mn(2+).

It carries out the reaction RNA(n) + UTP = RNA(n)-3'-uridine ribonucleotide + diphosphate. Its activity is regulated as follows. The 3' uridylated RNA substrate is involved in the selective incorporation of UTP; UTP binding is favored due to the constraint posed on the positioning of the NTP base by the continuous stacking interactions between Tyr-189 side chain, the bound NTP, and the terminal nucleoside base of the RNA substrate. Functionally, terminal uridylyltransferase which, specifically, catalyzes the addition of Us to the 3'-hydroxyl group of single-stranded RNAs with a 3'-terminal U. This is Terminal uridylyltransferase 4 from Trypanosoma brucei brucei (strain 927/4 GUTat10.1).